The chain runs to 380 residues: Chaperone protein DnaJ (380 aa).

In terms of domain architecture, J spans 5 to 70 (DYYEVLGVER…SKRAAYDQYG (66 aa)). A CR-type zinc finger spans residues 139–217 (GTTVNIRVPT…CHGEGRVEES (79 aa)). Zn(2+) is bound by residues Cys-152, Cys-155, Cys-169, Cys-172, Cys-191, Cys-194, Cys-205, and Cys-208. CXXCXGXG motif repeat units lie at residues 152-159 (CKPCDGSG), 169-176 (CPTCGGIG), 191-198 (CPRCHGHG), and 205-212 (CDSCHGEG).

The protein belongs to the DnaJ family. Homodimer. Zn(2+) is required as a cofactor.

The protein resides in the cytoplasm. Participates actively in the response to hyperosmotic and heat shock by preventing the aggregation of stress-denatured proteins and by disaggregating proteins, also in an autonomous, DnaK-independent fashion. Unfolded proteins bind initially to DnaJ; upon interaction with the DnaJ-bound protein, DnaK hydrolyzes its bound ATP, resulting in the formation of a stable complex. GrpE releases ADP from DnaK; ATP binding to DnaK triggers the release of the substrate protein, thus completing the reaction cycle. Several rounds of ATP-dependent interactions between DnaJ, DnaK and GrpE are required for fully efficient folding. Also involved, together with DnaK and GrpE, in the DNA replication of plasmids through activation of initiation proteins. The chain is Chaperone protein DnaJ from Pseudomonas syringae pv. tomato (strain ATCC BAA-871 / DC3000).